The primary structure comprises 320 residues: Probable carboxylesterase M8 (320 aa).

An Involved in the stabilization of the negatively charged intermediate by the formation of the oxyanion hole motif is present at residues 52-54 (HGG). Catalysis depends on residues Ser-137 and His-296.

This sequence belongs to the 'GDXG' lipolytic enzyme family.

The enzyme catalyses a carboxylic ester + H2O = an alcohol + a carboxylate + H(+). It functions in the pathway secondary metabolite biosynthesis. In terms of biological role, probable carboxylesterase; part of the gene cluster that mediates the biosynthesis of squalestatin S1 (SQS1, also known as zaragozic acid A), a heavily oxidized fungal polyketide that offers potent cholesterol lowering activity by targeting squalene synthase (SS). SQS1 is composed of a 2,8-dioxobicyclic[3.2.1]octane-3,4,5-tricarboxyclic acid core that is connected to two lipophilic polyketide arms. These initial steps feature the priming of an unusual benzoic acid starter unit onto the highly reducing polyketide synthase pks2, followed by oxaloacetate extension and product release to generate a tricarboxylic acid containing product. The phenylalanine ammonia lyase (PAL) M7 and the acyl-CoA ligase M9 are involved in transforming phenylalanine into benzoyl-CoA. The citrate synthase-like protein R3 is involved in connecting the C-alpha-carbons of the hexaketide chain and oxaloacetate to afford the tricarboxylic acid unit. The potential hydrolytic enzymes, M8 and M10, are in close proximity to pks2 and may participate in product release. On the other side, the tetraketide arm is synthesized by a the squalestatin tetraketide synthase pks1 and enzymatically esterified to the core in the last biosynthetic step, by the acetyltransferase M4. The biosynthesis of the tetraketide must involve 3 rounds of chain extension. After the first and second rounds methyl-transfer occurs, and in all rounds of extension the ketoreductase and dehydratase are active. The enoyl reductase and C-MeT of pks1 are not active in the final round of extension. The acetyltransferase M4 appears to have a broad substrate selectivity for its acyl CoA substrate, allowing the in vitro synthesis of novel squalestatins. The biosynthesis of SQS1 requires several oxidative steps likely performed by oxidoreductases M1, R1 and R2. Finally, in support of the identification of the cluster as being responsible for SQS1 production, the cluster contains a gene encoding a putative squalene synthase (SS) R6, suggesting a likely mechanism for self-resistance. The polypeptide is Probable carboxylesterase M8 (Phoma sp. (strain ATCC 20986 / MF5453)).